The chain runs to 443 residues: Probable D-serine dehydratase (443 aa).

Residue Lys116 is modified to N6-(pyridoxal phosphate)lysine.

This sequence belongs to the serine/threonine dehydratase family. DsdA subfamily. Pyridoxal 5'-phosphate is required as a cofactor.

It carries out the reaction D-serine = pyruvate + NH4(+). In Bacillus cereus (strain ATCC 14579 / DSM 31 / CCUG 7414 / JCM 2152 / NBRC 15305 / NCIMB 9373 / NCTC 2599 / NRRL B-3711), this protein is Probable D-serine dehydratase.